Here is a 618-residue protein sequence, read N- to C-terminus: Proline--tRNA ligase (618 aa).

The protein belongs to the class-II aminoacyl-tRNA synthetase family. ProS type 1 subfamily. As to quaternary structure, homodimer.

Its subcellular location is the cytoplasm. It catalyses the reaction tRNA(Pro) + L-proline + ATP = L-prolyl-tRNA(Pro) + AMP + diphosphate. Catalyzes the attachment of proline to tRNA(Pro) in a two-step reaction: proline is first activated by ATP to form Pro-AMP and then transferred to the acceptor end of tRNA(Pro). As ProRS can inadvertently accommodate and process non-cognate amino acids such as alanine and cysteine, to avoid such errors it has two additional distinct editing activities against alanine. One activity is designated as 'pretransfer' editing and involves the tRNA(Pro)-independent hydrolysis of activated Ala-AMP. The other activity is designated 'posttransfer' editing and involves deacylation of mischarged Ala-tRNA(Pro). The misacylated Cys-tRNA(Pro) is not edited by ProRS. In Streptococcus pyogenes serotype M18 (strain MGAS8232), this protein is Proline--tRNA ligase.